The chain runs to 1507 residues: Protein TIC 214 (1507 aa).

A run of 6 helical transmembrane segments spans residues 4–24, 53–73, 81–101, 129–149, 163–183, and 202–222; these read IYLV…LPIG, TILL…VLAL, LWVK…IYLY, AFLE…NPVF, ISTF…IFFL, and LVKI…SFLC.

The protein belongs to the TIC214 family. In terms of assembly, part of the Tic complex.

It is found in the plastid. Its subcellular location is the chloroplast inner membrane. Functionally, involved in protein precursor import into chloroplasts. May be part of an intermediate translocation complex acting as a protein-conducting channel at the inner envelope. This chain is Protein TIC 214, found in Staurastrum punctulatum (Green alga).